The chain runs to 287 residues: Nucleotide-binding protein HEAR2885 (287 aa).

8–15 (GISGSGKS) is a binding site for ATP. 57 to 60 (DVRS) lines the GTP pocket.

The protein belongs to the RapZ-like family.

In terms of biological role, displays ATPase and GTPase activities. This chain is Nucleotide-binding protein HEAR2885, found in Herminiimonas arsenicoxydans.